A 60-amino-acid polypeptide reads, in one-letter code: MAQIKITLTKSPIGRIPSQRKTVVALGLGKLNSSVIKEDNPAVRGMITAVSHLVTVEEVK.

Belongs to the universal ribosomal protein uL30 family. Part of the 50S ribosomal subunit.

The polypeptide is Large ribosomal subunit protein uL30 (Streptococcus gordonii (strain Challis / ATCC 35105 / BCRC 15272 / CH1 / DL1 / V288)).